Reading from the N-terminus, the 121-residue chain is Large ribosomal subunit protein bL12 (121 aa).

It belongs to the bacterial ribosomal protein bL12 family. Homodimer. Part of the ribosomal stalk of the 50S ribosomal subunit. Forms a multimeric L10(L12)X complex, where L10 forms an elongated spine to which 2 to 4 L12 dimers bind in a sequential fashion. Binds GTP-bound translation factors.

Its function is as follows. Forms part of the ribosomal stalk which helps the ribosome interact with GTP-bound translation factors. Is thus essential for accurate translation. In Salmonella agona (strain SL483), this protein is Large ribosomal subunit protein bL12.